The primary structure comprises 181 residues: UPF0397 protein SSU98_0390 (181 aa).

5 helical membrane passes run 9-29 (VVAT…INIP), 46-66 (LLAV…GHTL), 70-90 (LTYG…LVVG), 108-128 (ILFF…VIAP), and 147-167 (LVAG…LLVV).

It belongs to the UPF0397 family.

The protein resides in the cell membrane. The chain is UPF0397 protein SSU98_0390 from Streptococcus suis (strain 98HAH33).